The following is a 264-amino-acid chain: Small ribosomal subunit protein uS3 (264 aa).

Residues 39–107 enclose the KH type-2 domain; that stretch reads VRDFLKKKLK…PVHVNIEEIR (69 aa). The tract at residues 211 to 264 is disordered; the sequence is NDAPVVEEPQDDRRRRPGRPEGRRREGEGRPGGNRRGGAGAGRRAAPGDAKSGE. Over residues 221-239 the composition is skewed to basic and acidic residues; the sequence is DDRRRRPGRPEGRRREGEG. Positions 240–251 are enriched in gly residues; sequence RPGGNRRGGAGA.

Belongs to the universal ribosomal protein uS3 family. In terms of assembly, part of the 30S ribosomal subunit. Forms a tight complex with proteins S10 and S14.

In terms of biological role, binds the lower part of the 30S subunit head. Binds mRNA in the 70S ribosome, positioning it for translation. The sequence is that of Small ribosomal subunit protein uS3 from Cupriavidus pinatubonensis (strain JMP 134 / LMG 1197) (Cupriavidus necator (strain JMP 134)).